A 427-amino-acid polypeptide reads, in one-letter code: Peptidase B (427 aa).

Lysine 195 and aspartate 200 together coordinate Mn(2+). The active site involves lysine 207. The Mn(2+) site is built by aspartate 218, aspartate 277, and glutamate 279. The active site involves arginine 281.

It belongs to the peptidase M17 family. As to quaternary structure, homohexamer. Mn(2+) serves as cofactor.

The protein resides in the cytoplasm. The enzyme catalyses Release of an N-terminal amino acid, Xaa, from a peptide or arylamide. Xaa is preferably Glu or Asp but may be other amino acids, including Leu, Met, His, Cys and Gln.. Probably plays an important role in intracellular peptide degradation. In Shigella flexneri, this protein is Peptidase B.